The chain runs to 210 residues: MTTTQTAKASRRARIERRTRESDIVIELDLDGTGQVAVDTGVPFYDHMLTALGSHASFDLTVRATGDVEIEAHHTIEDTAIALGTALGQALGDKRGIRRFGDAFIPMDETLAHAAVDLSGRPYCVHTGEPDHLQHTTIAGSSVPYHTVINRHVFESLAANARIALHVRVLYGRDPHHITEAQYKAVARALRQAVEPDPRVSGVPSTKGAL.

It belongs to the imidazoleglycerol-phosphate dehydratase family.

It is found in the cytoplasm. The catalysed reaction is D-erythro-1-(imidazol-4-yl)glycerol 3-phosphate = 3-(imidazol-4-yl)-2-oxopropyl phosphate + H2O. Its pathway is amino-acid biosynthesis; L-histidine biosynthesis; L-histidine from 5-phospho-alpha-D-ribose 1-diphosphate: step 6/9. The sequence is that of Imidazoleglycerol-phosphate dehydratase from Mycobacterium bovis (strain ATCC BAA-935 / AF2122/97).